The sequence spans 392 residues: L-rhamnonate dehydratase (392 aa).

Residues H22 and R48 each contribute to the substrate site. Positions 214, 240, and 268 each coordinate Mg(2+). Catalysis depends on H318, which acts as the Proton acceptor. A substrate-binding site is contributed by E338.

Belongs to the mandelate racemase/muconate lactonizing enzyme family. RhamD subfamily. Homooctamer; tetramer of dimers. The cofactor is Mg(2+).

The catalysed reaction is L-rhamnonate = 2-dehydro-3-deoxy-L-rhamnonate + H2O. Catalyzes the dehydration of L-rhamnonate to 2-keto-3-deoxy-L-rhamnonate (KDR). This chain is L-rhamnonate dehydratase, found in Burkholderia orbicola (strain MC0-3).